We begin with the raw amino-acid sequence, 273 residues long: Large ribosomal subunit protein uL2 (273 aa).

The disordered stretch occupies residues 224–264 (AMNPVDHPHGGGEGRNFGKHPVTPWGIQTKGKKTRKNKRTD). Residues 253 to 264 (KGKKTRKNKRTD) show a composition bias toward basic residues.

The protein belongs to the universal ribosomal protein uL2 family. In terms of assembly, part of the 50S ribosomal subunit. Forms a bridge to the 30S subunit in the 70S ribosome.

Its function is as follows. One of the primary rRNA binding proteins. Required for association of the 30S and 50S subunits to form the 70S ribosome, for tRNA binding and peptide bond formation. It has been suggested to have peptidyltransferase activity; this is somewhat controversial. Makes several contacts with the 16S rRNA in the 70S ribosome. In Buchnera aphidicola subsp. Acyrthosiphon pisum (strain 5A), this protein is Large ribosomal subunit protein uL2.